Reading from the N-terminus, the 589-residue chain is Kelch-like protein 25 (589 aa).

In terms of domain architecture, BTB spans 46 to 114 (TDVTLWAGDR…AYSSRIVINE (69 aa)). A BACK domain is found at 149–250 (CLGMMVLSDA…LPSDCLKKAV (102 aa)). 6 Kelch repeats span residues 296–340 (TLLI…AIGC), 341–388 (KVYV…ELEN), 389–444 (CLYV…SAKL), 446–492 (LFVF…VLGS), 493–538 (QIFI…ASGN), and 539–585 (KLYV…STWK).

Component of the BCR(KLHL25) E3 ubiquitin ligase complex, at least composed of CUL3, KLHL25 and RBX1.

It participates in protein modification; protein ubiquitination. Substrate-specific adapter of a BCR (BTB-CUL3-RBX1) E3 ubiquitin ligase complex involved in various processes, such as translation homeostasis and lipid synthesis. The BCR(KLHL25) ubiquitin ligase complex acts by mediating ubiquitination of hypophosphorylated EIF4EBP1 (4E-BP1): ubiquitination and subsequent degradation of hypophosphorylated EIF4EBP1 (4E-BP1) probably serves as a homeostatic mechanism to maintain translation and prevent eIF4E inhibition when eIF4E levels are low. The BCR(KLHL25) complex does not target EIF4EBP1 (4E-BP1) when it is hyperphosphorylated or associated with eIF4E. The BCR(KLHL25) complex also acts as a regulator of lipid synthesis by mediating ubiquitination and degradation of ACLY, thereby inhibiting lipid synthesis. BCR(KLHL25)-mediated degradation of ACLY promotes fatty acid oxidation and is required for differentiation of inducible regulatory T (iTreg) cells. The polypeptide is Kelch-like protein 25 (Rattus norvegicus (Rat)).